The chain runs to 177 residues: Alkyl hydroperoxide reductase AhpD (177 aa).

Cys130 acts as the Proton donor in catalysis. A disulfide bond links Cys130 and Cys133. Catalysis depends on Cys133, which acts as the Cysteine sulfenic acid (-SOH) intermediate.

It belongs to the AhpD family. In terms of assembly, homotrimer.

The catalysed reaction is N(6)-[(R)-dihydrolipoyl]-L-lysyl-[lipoyl-carrier protein] + a hydroperoxide = N(6)-[(R)-lipoyl]-L-lysyl-[lipoyl-carrier protein] + an alcohol + H2O. Functionally, antioxidant protein with alkyl hydroperoxidase activity. Required for the reduction of the AhpC active site cysteine residues and for the regeneration of the AhpC enzyme activity. The polypeptide is Alkyl hydroperoxide reductase AhpD (Mycobacterium bovis (strain ATCC BAA-935 / AF2122/97)).